Reading from the N-terminus, the 314-residue chain is Methionyl-tRNA formyltransferase (314 aa).

Residue 113–116 (SLLP) coordinates (6S)-5,6,7,8-tetrahydrofolate.

It belongs to the Fmt family.

It catalyses the reaction L-methionyl-tRNA(fMet) + (6R)-10-formyltetrahydrofolate = N-formyl-L-methionyl-tRNA(fMet) + (6S)-5,6,7,8-tetrahydrofolate + H(+). Its function is as follows. Attaches a formyl group to the free amino group of methionyl-tRNA(fMet). The formyl group appears to play a dual role in the initiator identity of N-formylmethionyl-tRNA by promoting its recognition by IF2 and preventing the misappropriation of this tRNA by the elongation apparatus. The sequence is that of Methionyl-tRNA formyltransferase from Pseudomonas aeruginosa (strain UCBPP-PA14).